The primary structure comprises 493 residues: Acetyl-coenzyme A carboxylase carboxyl transferase subunit beta (493 aa).

The region spanning 231 to 493 (LWVQCENCYG…FKLHAFFPLN (263 aa)) is the CoA carboxyltransferase N-terminal domain. Zn(2+) is bound by residues C235, C238, C254, and C257. The C4-type zinc finger occupies 235-257 (CENCYGLNYKKFLKSKINLCEQC).

The protein belongs to the AccD/PCCB family. As to quaternary structure, acetyl-CoA carboxylase is a heterohexamer composed of biotin carboxyl carrier protein, biotin carboxylase and 2 subunits each of ACCase subunit alpha and ACCase plastid-coded subunit beta (accD). It depends on Zn(2+) as a cofactor.

The protein resides in the plastid stroma. It carries out the reaction N(6)-carboxybiotinyl-L-lysyl-[protein] + acetyl-CoA = N(6)-biotinyl-L-lysyl-[protein] + malonyl-CoA. The protein operates within lipid metabolism; malonyl-CoA biosynthesis; malonyl-CoA from acetyl-CoA: step 1/1. Its function is as follows. Component of the acetyl coenzyme A carboxylase (ACC) complex. Biotin carboxylase (BC) catalyzes the carboxylation of biotin on its carrier protein (BCCP) and then the CO(2) group is transferred by the transcarboxylase to acetyl-CoA to form malonyl-CoA. This Epifagus virginiana (Beechdrops) protein is Acetyl-coenzyme A carboxylase carboxyl transferase subunit beta.